A 369-amino-acid chain; its full sequence is Anhydro-N-acetylmuramic acid kinase (369 aa).

Residue 12-19 (GTSLDGVD) participates in ATP binding.

It belongs to the anhydro-N-acetylmuramic acid kinase family.

The enzyme catalyses 1,6-anhydro-N-acetyl-beta-muramate + ATP + H2O = N-acetyl-D-muramate 6-phosphate + ADP + H(+). Its pathway is amino-sugar metabolism; 1,6-anhydro-N-acetylmuramate degradation. It participates in cell wall biogenesis; peptidoglycan recycling. Its function is as follows. Catalyzes the specific phosphorylation of 1,6-anhydro-N-acetylmuramic acid (anhMurNAc) with the simultaneous cleavage of the 1,6-anhydro ring, generating MurNAc-6-P. Is required for the utilization of anhMurNAc either imported from the medium or derived from its own cell wall murein, and thus plays a role in cell wall recycling. This Escherichia coli O8 (strain IAI1) protein is Anhydro-N-acetylmuramic acid kinase.